The following is a 123-amino-acid chain: Histone H2B.3 (123 aa).

Residues 1–30 (MPPKVSGKAAKKAGKAQKNISKGDKKKNRK) form a disordered region. Ser110 carries O-linked (GlcNAc) serine glycosylation. Residue Lys118 forms a Glycyl lysine isopeptide (Lys-Gly) (interchain with G-Cter in ubiquitin) linkage.

It belongs to the histone H2B family. The nucleosome is a histone octamer containing two molecules each of H2A, H2B, H3 and H4 assembled in one H3-H4 heterotetramer and two H2A-H2B heterodimers. The octamer wraps approximately 147 bp of DNA. Post-translationally, monoubiquitination of Lys-118 gives a specific tag for epigenetic transcriptional activation and is also prerequisite for histone H3 'Lys-4' and 'Lys-79' methylation. In terms of processing, glcNAcylation at Ser-110 promotes monoubiquitination of Lys-118. It fluctuates in response to extracellular glucose, and associates with transcribed genes.

The protein resides in the nucleus. Its subcellular location is the chromosome. Its function is as follows. Core component of nucleosome. Nucleosomes wrap and compact DNA into chromatin, limiting DNA accessibility to the cellular machineries which require DNA as a template. Histones thereby play a central role in transcription regulation, DNA repair, DNA replication and chromosomal stability. DNA accessibility is regulated via a complex set of post-translational modifications of histones, also called histone code, and nucleosome remodeling. This chain is Histone H2B.3, found in Tigriopus californicus (Marine copepod).